Consider the following 854-residue polypeptide: Aryl hydrocarbon receptor (854 aa).

The propeptide occupies 1 to 9; the sequence is MSSGANITY. Residues 1–38 are disordered; the sequence is MSSGANITYASRKRRKPVQKTVKPIPAEGIKSNPSKRH. 2 short sequence motifs (nuclear localization signal) span residues 12–15 and 36–41; these read RKRR and KRHRDR. The bHLH domain maps to 26–79; it reads PAEGIKSNPSKRHRDRLNTELDRLASLLPFPQDVINKLDKLSVLRLSVSYLRAK. A DNA-binding region spans residues 37–65; that stretch reads RHRDRLNTELDRLASLLPFPQDVINKLDK. Required for maintaining the overall integrity of the AHR:ARNT heterodimer and its transcriptional activity stretches follow at residues 49-81, 116-124, and 264-266; these read LASL…AKSF, LLQALNGFV, and FAI. A Nuclear export signal motif is present at residues 63 to 71; it reads LDKLSVLRL. A PAS 1 domain is found at 111–175; that stretch reads QEGEFLLQAL…AEFQRQLHWA (65 aa). The region spanning 270-340 is the PAS 2 domain; sequence LQPPSILEIR…CAESHIRMIK (71 aa). The PAC domain maps to 346–387; it reads MTVFRLLAKHSRWRWVQSNARLIYRNGRPDYIIATQRPLTDE. The segment at 425-451 is disordered; the sequence is LPIRTKSNTSRKDWAPQSTPSKDSFHP. A compositionally biased stretch (polar residues) spans 440 to 451; the sequence is PQSTPSKDSFHP.

As to quaternary structure, homodimer. Heterodimer; efficient DNA binding requires dimerization with another bHLH protein. Interacts with ARNT; the heterodimer ARNT:AHR binds to core DNA sequence 5'-TGCGTG-3' within the dioxin response element (DRE) of target gene promoters and activates their transcription. Binds MYBBP1A. Interacts with coactivators including SRC-1, RIP140 and NOCA7, and with the corepressor SMRT. Interacts with NEDD8 and IVNS1ABP. Interacts with BMAL1. Interacts with HSP90AB1. Interacts with TIPARP; leading to mono-ADP-ribosylation of AHR and subsequent inhibition of AHR. In terms of processing, mono-ADP-ribosylated, leading to inhibit transcription activator activity of AHR.

Its subcellular location is the cytoplasm. It is found in the nucleus. Ligand-activated transcription factor that enables cells to adapt to changing conditions by sensing compounds from the environment, diet, microbiome and cellular metabolism, and which plays important roles in development, immunity and cancer. Upon ligand binding, translocates into the nucleus, where it heterodimerizes with ARNT and induces transcription by binding to xenobiotic response elements (XRE). Regulates a variety of biological processes, including angiogenesis, hematopoiesis, drug and lipid metabolism, cell motility and immune modulation. Xenobiotics can act as ligands: upon xenobiotic-binding, activates the expression of multiple phase I and II xenobiotic chemical metabolizing enzyme genes (such as the CYP1A1 gene). Mediates biochemical and toxic effects of halogenated aromatic hydrocarbons. Next to xenobiotics, natural ligands derived from plants, microbiota, and endogenous metabolism are potent AHR agonists. Tryptophan (Trp) derivatives constitute an important class of endogenous AHR ligands. Acts as a negative regulator of anti-tumor immunity: indoles and kynurenic acid generated by Trp catabolism act as ligand and activate AHR, thereby promoting AHR-driven cancer cell motility and suppressing adaptive immunity. Regulates the circadian clock by inhibiting the basal and circadian expression of the core circadian component PER1. Inhibits PER1 by repressing the CLOCK-BMAL1 heterodimer mediated transcriptional activation of PER1. The heterodimer ARNT:AHR binds to core DNA sequence 5'-TGCGTG-3' within the dioxin response element (DRE) of target gene promoters and activates their transcription. The sequence is that of Aryl hydrocarbon receptor (Ahr) from Mus spicilegus (Steppe mouse).